The primary structure comprises 501 residues: Head-tail preconnector protein GP5 (501 aa).

Ser162 (nucleophile) is an active-site residue. The active-site Proton donor/acceptor is the Lys214. TRI repeat units lie at residues 321–358, 371–417, and 418–455; these read ILTCQEAKGREQLATMLAGQQGMSVEQARAILAAAAPQ, IMVC…LRDQ, and IMALDEAKGAEAQAEQLAACPGMTVESARAVLAAGSGK. The interval 321-455 is 3 X 38 AA repeats; it reads ILTCQEAKGR…RAVLAAGSGK (135 aa).

Belongs to the peptidase S49 family.

Its function is as follows. Scaffold protein GP6 forms the scaffold for capsid assembly and is required for binding of the 5 and 4 protein products. It is subsequently lost from the head during maturation. This is Head-tail preconnector protein GP5 (5) from Escherichia coli (Bacteriophage 21).